The primary structure comprises 487 residues: Glutamyl-tRNA(Gln) amidotransferase subunit A (487 aa).

Active-site charge relay system residues include K77 and S152. The active-site Acyl-ester intermediate is the S176.

It belongs to the amidase family. GatA subfamily. As to quaternary structure, heterotrimer of A, B and C subunits.

It catalyses the reaction L-glutamyl-tRNA(Gln) + L-glutamine + ATP + H2O = L-glutaminyl-tRNA(Gln) + L-glutamate + ADP + phosphate + H(+). Functionally, allows the formation of correctly charged Gln-tRNA(Gln) through the transamidation of misacylated Glu-tRNA(Gln) in organisms which lack glutaminyl-tRNA synthetase. The reaction takes place in the presence of glutamine and ATP through an activated gamma-phospho-Glu-tRNA(Gln). The polypeptide is Glutamyl-tRNA(Gln) amidotransferase subunit A (Limosilactobacillus fermentum (strain NBRC 3956 / LMG 18251) (Lactobacillus fermentum)).